We begin with the raw amino-acid sequence, 130 residues long: Organ-specific protein P4 (130 aa).

A run of 2 repeats spans residues histidine 60–isoleucine 85 and histidine 86–isoleucine 111. The 2 X 26 AA tandem repeats stretch occupies residues histidine 60 to isoleucine 111. A disordered region spans residues alanine 79–alanine 130.

It to organ specific protein S2. As to expression, expressed in pods.

This chain is Organ-specific protein P4, found in Pisum sativum (Garden pea).